Here is a 443-residue protein sequence, read N- to C-terminus: UDP-N-acetylmuramate--L-alanine ligase (443 aa).

110 to 116 serves as a coordination point for ATP; the sequence is GAHGKTS.

Belongs to the MurCDEF family.

It localises to the cytoplasm. The catalysed reaction is UDP-N-acetyl-alpha-D-muramate + L-alanine + ATP = UDP-N-acetyl-alpha-D-muramoyl-L-alanine + ADP + phosphate + H(+). The protein operates within cell wall biogenesis; peptidoglycan biosynthesis. Its function is as follows. Cell wall formation. This is UDP-N-acetylmuramate--L-alanine ligase from Lactococcus lactis subsp. cremoris (strain MG1363).